We begin with the raw amino-acid sequence, 443 residues long: Ribosomal protein uS12 methylthiotransferase RimO (443 aa).

In terms of domain architecture, MTTase N-terminal spans 5 to 116; that stretch reads PTIAINHLGC…IVDIIRRTEQ (112 aa). 6 residues coordinate [4Fe-4S] cluster: cysteine 14, cysteine 50, cysteine 79, cysteine 154, cysteine 158, and cysteine 161. The Radical SAM core domain maps to 140–369; it reads TTNEAIAYLR…MALQQPISAQ (230 aa). Positions 372–438 constitute a TRAM domain; that stretch reads AACLGQTLDV…DYDLYGMTAE (67 aa).

Belongs to the methylthiotransferase family. RimO subfamily. The cofactor is [4Fe-4S] cluster.

It is found in the cytoplasm. It catalyses the reaction L-aspartate(89)-[ribosomal protein uS12]-hydrogen + (sulfur carrier)-SH + AH2 + 2 S-adenosyl-L-methionine = 3-methylsulfanyl-L-aspartate(89)-[ribosomal protein uS12]-hydrogen + (sulfur carrier)-H + 5'-deoxyadenosine + L-methionine + A + S-adenosyl-L-homocysteine + 2 H(+). Catalyzes the methylthiolation of an aspartic acid residue of ribosomal protein uS12. This is Ribosomal protein uS12 methylthiotransferase RimO from Synechocystis sp. (strain ATCC 27184 / PCC 6803 / Kazusa).